Reading from the N-terminus, the 450-residue chain is Tubulin alpha-1 chain (450 aa).

GTP is bound at residue Q11. K40 carries the N6-acetyllysine modification. The GTP site is built by E71, S140, G144, T145, T179, N206, and N228. E71 lines the Mg(2+) pocket. E254 is an active-site residue.

It belongs to the tubulin family. As to quaternary structure, dimer of alpha and beta chains. A typical microtubule is a hollow water-filled tube with an outer diameter of 25 nm and an inner diameter of 15 nM. Alpha-beta heterodimers associate head-to-tail to form protofilaments running lengthwise along the microtubule wall with the beta-tubulin subunit facing the microtubule plus end conferring a structural polarity. Microtubules usually have 13 protofilaments but different protofilament numbers can be found in some organisms and specialized cells. Interacts with Ote. Requires Mg(2+) as cofactor. In terms of processing, undergoes a tyrosination/detyrosination cycle, the cyclic removal and re-addition of a C-terminal tyrosine residue by the enzymes tubulin tyrosine carboxypeptidase (TTCP) and tubulin tyrosine ligase (TTL), respectively. Acetylation of alpha chains at Lys-40 stabilizes microtubules and affects affinity and processivity of microtubule motors. This modification has a role in multiple cellular functions, ranging from cell motility, cell cycle progression or cell differentiation to intracellular trafficking and signaling. During the early stages of oogenesis lky/Alpha-tubulin N-acetyltransferase 2 is the main acetyltransferase responsible for Lys-40 acetylation in germline cells while Atat/alpha-tubulin N-acetyltransferase 1 is the main acetyltransferase responsible for Lys-40 acetylation in somatic cells.

Its subcellular location is the cytoplasm. The protein localises to the cytoskeleton. It carries out the reaction GTP + H2O = GDP + phosphate + H(+). In terms of biological role, tubulin is the major constituent of microtubules, a cylinder consisting of laterally associated linear protofilaments composed of alpha- and beta-tubulin heterodimers. Microtubules grow by the addition of GTP-tubulin dimers to the microtubule end, where a stabilizing cap forms. Below the cap, tubulin dimers are in GDP-bound state, owing to GTPase activity of alpha-tubulin. The protein is Tubulin alpha-1 chain (alphaTub84B) of Drosophila melanogaster (Fruit fly).